An 82-amino-acid chain; its full sequence is ATP synthase subunit c (82 aa).

The next 2 helical transmembrane spans lie at 7-27 and 57-77; these read AASVVAAGLAVGLGAIGPGIG and FAFMESLTIYGLVVALVLLFA.

This sequence belongs to the ATPase C chain family. In terms of assembly, F-type ATPases have 2 components, F(1) - the catalytic core - and F(0) - the membrane proton channel. F(1) has five subunits: alpha(3), beta(3), gamma(1), delta(1), epsilon(1). F(0) has four main subunits: a(1), b(1), b'(1) and c(10-14). The alpha and beta chains form an alternating ring which encloses part of the gamma chain. F(1) is attached to F(0) by a central stalk formed by the gamma and epsilon chains, while a peripheral stalk is formed by the delta, b and b' chains.

It is found in the cellular thylakoid membrane. Its function is as follows. F(1)F(0) ATP synthase produces ATP from ADP in the presence of a proton or sodium gradient. F-type ATPases consist of two structural domains, F(1) containing the extramembraneous catalytic core and F(0) containing the membrane proton channel, linked together by a central stalk and a peripheral stalk. During catalysis, ATP synthesis in the catalytic domain of F(1) is coupled via a rotary mechanism of the central stalk subunits to proton translocation. Functionally, key component of the F(0) channel; it plays a direct role in translocation across the membrane. A homomeric c-ring of between 10-14 subunits forms the central stalk rotor element with the F(1) delta and epsilon subunits. In Prochlorococcus marinus (strain MIT 9303), this protein is ATP synthase subunit c.